The chain runs to 258 residues: Small ribosomal subunit protein mS40 (258 aa).

The transit peptide at 1-35 directs the protein to the mitochondrion; sequence MAASVLNTVLRRLPMLSLFRGSHRVQVPLQTLCTK. Phosphoserine occurs at positions 38 and 49. Residues 214–258 form a disordered region; the sequence is SRLRRLYQGHLQEESGPPPESMPKMPPRTPAEASSTGQTGPQSAL. The span at 229-242 shows a compositional bias: pro residues; the sequence is GPPPESMPKMPPRT. Over residues 245–258 the composition is skewed to polar residues; the sequence is EASSTGQTGPQSAL.

It belongs to the bacterial ribosomal protein bS18 family. Mitochondrion-specific ribosomal protein mS40 subfamily. Component of the mitochondrial small ribosomal subunit (mt-SSU). Mature mammalian 55S mitochondrial ribosomes consist of a small (28S) and a large (39S) subunit. The 28S small subunit contains a 12S ribosomal RNA (12S mt-rRNA) and 30 different proteins. The 39S large subunit contains a 16S rRNA (16S mt-rRNA), a copy of mitochondrial valine transfer RNA (mt-tRNA(Val)), which plays an integral structural role, and 52 different proteins. mS40 has a zinc binding site.

The protein localises to the mitochondrion. This chain is Small ribosomal subunit protein mS40 (MRPS18B), found in Homo sapiens (Human).